The chain runs to 116 residues: Large ribosomal subunit protein bL17 (116 aa).

This sequence belongs to the bacterial ribosomal protein bL17 family. Part of the 50S ribosomal subunit. Contacts protein L32.

This chain is Large ribosomal subunit protein bL17, found in Fusobacterium nucleatum subsp. nucleatum (strain ATCC 25586 / DSM 15643 / BCRC 10681 / CIP 101130 / JCM 8532 / KCTC 2640 / LMG 13131 / VPI 4355).